We begin with the raw amino-acid sequence, 276 residues long: Dermonecrotic toxin LafSicTox-betaIE2 (276 aa).

H5 is a catalytic residue. Residues E25 and D27 each contribute to the Mg(2+) site. H41 (nucleophile) is an active-site residue. Disulfide bonds link C45–C51 and C47–C189. D85 lines the Mg(2+) pocket.

It belongs to the arthropod phospholipase D family. Class II subfamily. The cofactor is Mg(2+). As to expression, expressed by the venom gland.

It is found in the secreted. It catalyses the reaction an N-(acyl)-sphingosylphosphocholine = an N-(acyl)-sphingosyl-1,3-cyclic phosphate + choline. The enzyme catalyses an N-(acyl)-sphingosylphosphoethanolamine = an N-(acyl)-sphingosyl-1,3-cyclic phosphate + ethanolamine. The catalysed reaction is a 1-acyl-sn-glycero-3-phosphocholine = a 1-acyl-sn-glycero-2,3-cyclic phosphate + choline. It carries out the reaction a 1-acyl-sn-glycero-3-phosphoethanolamine = a 1-acyl-sn-glycero-2,3-cyclic phosphate + ethanolamine. In terms of biological role, dermonecrotic toxins cleave the phosphodiester linkage between the phosphate and headgroup of certain phospholipids (sphingolipid and lysolipid substrates), forming an alcohol (often choline) and a cyclic phosphate. This toxin acts on sphingomyelin (SM). It may also act on ceramide phosphoethanolamine (CPE), lysophosphatidylcholine (LPC) and lysophosphatidylethanolamine (LPE), but not on lysophosphatidylserine (LPS), and lysophosphatidylglycerol (LPG). It acts by transphosphatidylation, releasing exclusively cyclic phosphate products as second products. Induces dermonecrosis, hemolysis, increased vascular permeability, edema, inflammatory response, and platelet aggregation. This is Dermonecrotic toxin LafSicTox-betaIE2 from Loxosceles aff. spinulosa (strain GJB-2008) (Recluse spider).